A 321-amino-acid chain; its full sequence is Carnitine monooxygenase reductase subunit (321 aa).

The FAD-binding FR-type domain maps to 4-109 (YQMFEVQVSQ…STPNNLFALI (106 aa)). In terms of domain architecture, 2Fe-2S ferredoxin-type spans 233–321 (DAFTLVLARS…AKGKRLVLDL (89 aa)). Residues Cys-270, Cys-275, Cys-278, and Cys-308 each contribute to the [2Fe-2S] cluster site.

It belongs to the PDR/VanB family. CntB subfamily. As to quaternary structure, composed of an oxygenase subunit (yeaW) and a reductase subunit (yeaX). Requires FMN as cofactor. The cofactor is [2Fe-2S] cluster.

It carries out the reaction (R)-carnitine + NADH + O2 + H(+) = (3R)-3-hydroxy-4-oxobutanoate + trimethylamine + NAD(+) + H2O. The catalysed reaction is (R)-carnitine + NADPH + O2 + H(+) = (3R)-3-hydroxy-4-oxobutanoate + trimethylamine + NADP(+) + H2O. Its pathway is amine and polyamine metabolism; carnitine metabolism. Functionally, converts carnitine to trimethylamine and malic semialdehyde. Can also use gamma-butyrobetaine, choline and betaine as substrates. In Escherichia coli (strain K12), this protein is Carnitine monooxygenase reductase subunit (yeaX).